The following is an 862-amino-acid chain: Protein translocase subunit SecA (862 aa).

ATP contacts are provided by residues glutamine 88, 106 to 110 (GEGKT), and aspartate 506. Zn(2+) is bound by residues cysteine 839, cysteine 841, cysteine 850, and histidine 851.

It belongs to the SecA family. In terms of assembly, monomer and homodimer. Part of the essential Sec protein translocation apparatus which comprises SecA, SecYEG and auxiliary proteins SecDF-YajC and YidC. Zn(2+) serves as cofactor.

It localises to the cell inner membrane. It is found in the cytoplasm. The enzyme catalyses ATP + H2O + cellular proteinSide 1 = ADP + phosphate + cellular proteinSide 2.. Its function is as follows. Part of the Sec protein translocase complex. Interacts with the SecYEG preprotein conducting channel. Has a central role in coupling the hydrolysis of ATP to the transfer of proteins into and across the cell membrane, serving as an ATP-driven molecular motor driving the stepwise translocation of polypeptide chains across the membrane. In Campylobacter jejuni subsp. doylei (strain ATCC BAA-1458 / RM4099 / 269.97), this protein is Protein translocase subunit SecA.